The chain runs to 412 residues: Arginine biosynthesis bifunctional protein ArgJ (412 aa).

Substrate-binding residues include T158, K184, T195, E284, N407, and S412. Catalysis depends on T195, which acts as the Nucleophile.

This sequence belongs to the ArgJ family. Heterotetramer of two alpha and two beta chains.

It is found in the cytoplasm. The enzyme catalyses N(2)-acetyl-L-ornithine + L-glutamate = N-acetyl-L-glutamate + L-ornithine. It carries out the reaction L-glutamate + acetyl-CoA = N-acetyl-L-glutamate + CoA + H(+). It participates in amino-acid biosynthesis; L-arginine biosynthesis; L-ornithine and N-acetyl-L-glutamate from L-glutamate and N(2)-acetyl-L-ornithine (cyclic): step 1/1. It functions in the pathway amino-acid biosynthesis; L-arginine biosynthesis; N(2)-acetyl-L-ornithine from L-glutamate: step 1/4. Its function is as follows. Catalyzes two activities which are involved in the cyclic version of arginine biosynthesis: the synthesis of N-acetylglutamate from glutamate and acetyl-CoA as the acetyl donor, and of ornithine by transacetylation between N(2)-acetylornithine and glutamate. The protein is Arginine biosynthesis bifunctional protein ArgJ of Bartonella quintana (strain Toulouse) (Rochalimaea quintana).